Consider the following 149-residue polypeptide: Aquaporin-like protein 2 (149 aa).

The disordered stretch occupies residues Met-1–Ser-35. The Cytoplasmic portion of the chain corresponds to Met-1 to His-47. Residues Phe-48–Ile-68 traverse the membrane as a helical segment. Topologically, residues Cys-69 to Gln-89 are extracellular. Residues Leu-90–Trp-110 traverse the membrane as a helical segment. Over Gly-111–Arg-149 the chain is Cytoplasmic.

Belongs to the MIP/aquaporin (TC 1.A.8) family.

It is found in the endoplasmic reticulum membrane. The protein resides in the cell membrane. Water channel required to facilitate the transport of water across membranes. Involved in freeze tolerance, osmotolerance and cell flocculation in liquid cultures. Is non-functional in most laboratory strains. This is Aquaporin-like protein 2 (AQY2-2) from Saccharomyces cerevisiae (strain JAY291) (Baker's yeast).